The following is a 204-amino-acid chain: Holliday junction branch migration complex subunit RuvA (204 aa).

Residues 1–64 form a domain I region; that stretch reads MIGRLRGILL…EDAQLLYGFN (64 aa). The domain II stretch occupies residues 65 to 143; it reads TVKERALFRE…GWSAGDLFTP (79 aa). The flexible linker stretch occupies residues 144-155; it reads FTDAAPVDSGST. The segment at 156–204 is domain III; that stretch reads SSNSAEEEAVSALLALGYKPVQASKVVSQIAKPDMTSEQLIREALKSMV.

It belongs to the RuvA family. As to quaternary structure, homotetramer. Forms an RuvA(8)-RuvB(12)-Holliday junction (HJ) complex. HJ DNA is sandwiched between 2 RuvA tetramers; dsDNA enters through RuvA and exits via RuvB. An RuvB hexamer assembles on each DNA strand where it exits the tetramer. Each RuvB hexamer is contacted by two RuvA subunits (via domain III) on 2 adjacent RuvB subunits; this complex drives branch migration. In the full resolvosome a probable DNA-RuvA(4)-RuvB(12)-RuvC(2) complex forms which resolves the HJ.

The protein resides in the cytoplasm. The RuvA-RuvB-RuvC complex processes Holliday junction (HJ) DNA during genetic recombination and DNA repair, while the RuvA-RuvB complex plays an important role in the rescue of blocked DNA replication forks via replication fork reversal (RFR). RuvA specifically binds to HJ cruciform DNA, conferring on it an open structure. The RuvB hexamer acts as an ATP-dependent pump, pulling dsDNA into and through the RuvAB complex. HJ branch migration allows RuvC to scan DNA until it finds its consensus sequence, where it cleaves and resolves the cruciform DNA. The sequence is that of Holliday junction branch migration complex subunit RuvA from Vibrio vulnificus (strain CMCP6).